A 700-amino-acid chain; its full sequence is MSIASDPLIAGLDDQQREAVLAPRGPVCVLAGAGTGKTRTITHRIASLVASGHVAAGQVLAVTFTQRAAGEMRSRLRALDAAARTGSGVGAVQALTFHAAAYRQLRYFWSRVIADTGWQLLDSKFAVVARAASRTRLHASTDDVRDLAGEIEWAKASLIGPEEYVTAVAAARRDPPLDAAQIAAVYSEYEALKARGDGVTLLDFDDLLLHTAAAIENDAAVAEEFQDRYRCFVVDEYQDVTPLQQRVLSAWLGDRDDLTVVGDANQTIYSFTGASPRFLLDFSRRFPDAAVVRLERDYRSTPQVVSLANRVIAAARGRVAGSKLRLSGQREPGPVPSFHEHSDEPAEAATVAASIARLIASGTPPSEVAILYRVNAQSEVYEEALTQAGIAYQVRGGEGFFNRQEIKQALLALQRVSERDTDAALSDVVRAVLAPLGLTAQPPVGTRARERWEALTALAELVDDELAQRPALQLPGLLAELRRRAEARHPPVVQGVTLASLHAAKGLEWDAVFLVGLADGTLPISHALAHGPNSEPVEEERRLLYVGITRARVHLALSWALSRSPGGRQSRKPSRFLNGIAPQTRADPVPGTSRRNRGAAARCRICNNELNTSAAVMLRRCETCAADVDEELLLQLKSWRLSTAKEQNVPAYVVFTDNTLIAIAELLPTDDAALIAIPGIGARKLEQYGSDVLQLVRGRT.

Positions 10 to 301 constitute a UvrD-like helicase ATP-binding domain; the sequence is AGLDDQQREA…VRLERDYRST (292 aa). Residues 34–39 and Arg-299 contribute to the ATP site; that span reads GTGKTR. The UvrD-like helicase C-terminal domain occupies 302–553; the sequence is PQVVSLANRV…LYVGITRARV (252 aa). A disordered region spans residues 565-595; that stretch reads PGGRQSRKPSRFLNGIAPQTRADPVPGTSRR. Positions 626 to 700 constitute an HRDC domain; the sequence is ADVDEELLLQ…DVLQLVRGRT (75 aa).

Belongs to the helicase family. UvrD subfamily. Mg(2+) serves as cofactor.

The catalysed reaction is Couples ATP hydrolysis with the unwinding of duplex DNA by translocating in the 3'-5' direction.. It carries out the reaction ATP + H2O = ADP + phosphate + H(+). In terms of biological role, DNA-dependent ATPase, stimulated equally by ss- and dsDNA. Has both ATPase and helicase activities. The protein is ATP-dependent DNA helicase UvrD2 (uvrD2) of Mycobacterium bovis (strain ATCC BAA-935 / AF2122/97).